The primary structure comprises 540 residues: Fumonisin B1 esterase (540 aa).

S240 serves as the catalytic Acyl-ester intermediate. Active-site charge relay system residues include E356 and H448. The disordered stretch occupies residues 521 to 540 (QVGSGEGLGVSPSKACQPSK).

The protein belongs to the type-B carboxylesterase/lipase family.

The catalysed reaction is fumonisin B1 + 2 H2O = 2 tricarballylate + (2S,3S,5R,10R,12S,14S,15R,16R)-2-amino-12,16-dimethylicosane-3,5,10,14,15-pentol + 2 H(+). Involved in degradation of fumonisin B1. Catalyzes the hydrolysis of fumonisin B1 (FB1) to aminopentol (HFB1). This is Fumonisin B1 esterase (fumD) from Sphingopyxis macrogoltabida (Sphingomonas macrogoltabidus).